A 430-amino-acid chain; its full sequence is Tektin-2 (430 aa).

Coiled coils occupy residues 82–160 (LTDL…QAFE) and 273–379 (EKVY…DIAC).

Belongs to the tektin family. As to quaternary structure, microtubule inner protein component of sperm flagellar doublet microtubules. May interact with CCDC172. Tyrosine phosphorylated. Post-translationally, ubiquitinated, leading to its degradation. Deubiquitinated by USP16, promoting its stability.

The protein localises to the cytoplasm. It localises to the cytoskeleton. Its subcellular location is the cilium axoneme. The protein resides in the flagellum axoneme. It is found in the microtubule organizing center. Microtubule inner protein (MIP) part of the dynein-decorated doublet microtubules (DMTs) in cilia and flagellar axoneme. Plays a key role in the assembly or attachment of the inner dynein arm to microtubules in sperm flagella and tracheal cilia. Forms filamentous polymers in the walls of ciliary and flagellar microtubules. In Macaca fascicularis (Crab-eating macaque), this protein is Tektin-2 (TEKT2).